The sequence spans 145 residues: Hemoglobin subunit beta-2 (145 aa).

The Globin domain occupies 2 to 145 (HLTAEDRKEI…GVSHALGHGY (144 aa)). Heme b-binding residues include His63 and His92.

It belongs to the globin family. As to quaternary structure, minor hemoglobin is a tetramer of two alpha-2 chains and two beta-2 chains. In terms of tissue distribution, red blood cells.

In terms of biological role, involved in oxygen transport from the lung to the various peripheral tissues. The chain is Hemoglobin subunit beta-2 (HBB2) from Triturus cristatus (Great crested newt).